Reading from the N-terminus, the 413-residue chain is Ribulose bisphosphate carboxylase large chain (413 aa).

Substrate-binding residues include Asn-100 and Thr-150. Lys-152 (proton acceptor) is an active-site residue. A substrate-binding site is contributed by Lys-154. Positions 178, 180, and 181 each coordinate Mg(2+). Lys-178 carries the post-translational modification N6-carboxylysine. His-271 (proton acceptor) is an active-site residue. 3 residues coordinate substrate: Arg-272, His-304, and Ser-356.

Belongs to the RuBisCO large chain family. Type I subfamily. In terms of assembly, heterohexadecamer of 8 large chains and 8 small chains; disulfide-linked. The disulfide link is formed within the large subunit homodimers. Mg(2+) serves as cofactor. Post-translationally, the disulfide bond which can form in the large chain dimeric partners within the hexadecamer appears to be associated with oxidative stress and protein turnover.

The protein resides in the plastid. It localises to the chloroplast. It carries out the reaction 2 (2R)-3-phosphoglycerate + 2 H(+) = D-ribulose 1,5-bisphosphate + CO2 + H2O. It catalyses the reaction D-ribulose 1,5-bisphosphate + O2 = 2-phosphoglycolate + (2R)-3-phosphoglycerate + 2 H(+). In terms of biological role, ruBisCO catalyzes two reactions: the carboxylation of D-ribulose 1,5-bisphosphate, the primary event in carbon dioxide fixation, as well as the oxidative fragmentation of the pentose substrate in the photorespiration process. Both reactions occur simultaneously and in competition at the same active site. In Adiantum pedatum (Northern maidenhair fern), this protein is Ribulose bisphosphate carboxylase large chain (rbcL).